The sequence spans 475 residues: Peripherin (475 aa).

The segment at 1-42 (MPSSASMSHHHSSGLRSSISSTSYRRTFGPPPSLSPGAFSYS) is disordered. A head region spans residues 1 to 103 (MPSSASMSHH…FLATRSNEKQ (103 aa)). Over residues 14–26 (GLRSSISSTSYRR) the composition is skewed to low complexity. Position 24 is a 3'-nitrotyrosine (Tyr-24). Residues Ser-35 and Ser-57 each carry the phosphoserine modification. Phosphoserine; by PKB/AKT1 is present on Ser-66. The region spanning 101-411 (EKQELQELND…KLLEGEESRI (311 aa)) is the IF rod domain. The segment at 104–136 (ELQELNDRFANFIEKVRFLEQQNAALRGELSQA) is coil 1A. Positions 137-147 (RGQEPARADQL) are linker 1. Residues 148-243 (CQQELRELRR…KLHEEELRDL (96 aa)) form a coil 1B region. Residues 244–266 (QVSVESQQVQQVEVEATVKPELT) are linker 2. The segment at 267–409 (AALRDIRAQY…YRKLLEGEES (143 aa)) is coil 2. Tyr-383 is subject to 3'-nitrotyrosine. The interval 410-475 (RISVPVHSFA…DLDKSSIHSY (66 aa)) is tail. Positions 453–475 (EKVVTESQKEQHSDLDKSSIHSY) are disordered. Tyr-475 carries the post-translational modification Phosphotyrosine.

It belongs to the intermediate filament family. Forms homodimers (in vitro). Homopolymerizes into a filamentous network (in vitro). Forms heterodimers with NEFL, NEFM or NEFH (in vitro). Interacts with DST (via C-terminus). Interacts with RAB7A; the interaction is direct. Interacts with PRKCE (via phorbol-ester/DAG-type 2 domain). Post-translationally, phosphorylated; phosphorylation increases after nerve injury in regenerating neurons. Expressed in the sciatic nerve and at very low levels in the central nervous system (at protein level). Expressed in the spinal cord, in the sciatic nerve at the level of the dorsal root ganglion and in trigeminal nerves (at protein level). Expressed in the cranial nerves in the hindbrain, including the sensory and motor trigeminal neurons, the mesencephalic trigeminal neurons, the spinal trigeminal neurons, and in the facial nerve (at protein level). Expressed in the cerebellum, with expression in the inferior cerebellar peduncle and the lateral deep cerebellar nucleus (at protein level). Expressed in vestibulocochlear neurons, such as the anteroventral cochlear nucleus, the dorsal cochlear nucleus, the superficial granule cell layer and the granule cell lamina (at protein level). Expressed in glossopharyngeal, vagal and hypoglossal neurons (at protein level). Expressed in peripheral sensory neurons, in the dorsal root ganglia and the spinal cord, and to a lower extent in motor neurons. Expressed in the optic tract of the central nervous system, especially in the lateral geniculate nucleus and the superior colliculus. Expressed in neurons of the pineal stalk in the cortex. Expressed in the spinal trigeminal tract of the midbrain, in the medulla and in the medial cerebellar peduncle.

The protein localises to the cytoplasm. It localises to the cytoskeleton. The protein resides in the cell projection. It is found in the axon. Its subcellular location is the perikaryon. Functionally, class-III neuronal intermediate filament protein. May form an independent structural network without the involvement of other neurofilaments or may cooperate with the neuronal intermediate filament proteins NEFL, NEFH, NEFM and INA to form filamentous networks. Assembly of the neuronal intermediate filaments may be regulated by RAB7A. Plays a role in the development of unmyelinated sensory neurons. May be involved in axon elongation and axon regeneration after injury. Inhibits neurite extension in type II spiral ganglion neurons in the cochlea. This is Peripherin (Prph) from Mus musculus (Mouse).